Here is a 420-residue protein sequence, read N- to C-terminus: Ammonia monooxygenase beta subunit (420 aa).

Residues 1-25 form the signal peptide; it reads MGIKNLYKRGVMGLYGVAYAVAALA. The Cu cation site is built by His38, His142, and His144. Transmembrane regions (helical) follow at residues 193–213 and 240–260; these read GIFWHVVWMSIGIFWIGVFTA and ITWVLAILTLALVWGGYRYTE.

The soluble ammonia monooxygenase is a nonamer composed of three alpha subunits (AmoA), three beta subunits (AmoB) and three gamma subunits (Cytochrome c1 PetC). Cu(2+) serves as cofactor.

The protein resides in the cell membrane. It localises to the cytoplasm. It carries out the reaction AH2 + NH4(+) + O2 = hydroxylamine + A + H2O + H(+). In vitro, inhibited by acetylene. Its function is as follows. Part of the ammonia monooxygenase complex, which catalyzes the oxidation of ammonia to hydroxylamine, the first reaction in the process of ammonia oxidation to nitrite. The chain is Ammonia monooxygenase beta subunit from Nitrosomonas europaea (strain ATCC 19718 / CIP 103999 / KCTC 2705 / NBRC 14298).